The chain runs to 1748 residues: Flagellar attachment zone protein 1 (1748 aa).

3 coiled-coil regions span residues 613-657 (REQE…KLQK), 684-864 (VTLD…HKVR), and 903-1663 (NDHM…SALE). 41 tandem repeats follow at residues 1012–1025 (EELE…EKLA), 1026–1039 (EELE…EKLA), 1040–1053 (EELE…EKLA), 1054–1067 (EALD…EKLA), 1068–1081 (EELE…EKLA), 1082–1095 (EELE…EKLA), 1096–1109 (EELE…EKLA), 1110–1123 (EELE…EKLA), 1124–1137 (EELE…EKLA), 1138–1151 (EELE…EKLA), 1152–1165 (EALD…EKLA), 1166–1179 (EELD…EKLA), 1180–1193 (EELE…EKLA), 1194–1207 (EELE…EKLA), 1208–1221 (EELE…EKLA), 1222–1235 (EELE…EKLA), 1236–1249 (EELE…EKLA), 1250–1263 (EELE…EKLA), 1264–1277 (EELE…EKLA), 1278–1291 (EELE…EKLA), 1292–1305 (EELE…EKLA), 1306–1319 (EELE…EKLA), 1320–1333 (EELE…EKLA), 1334–1347 (EELE…EKLA), 1348–1361 (EELE…EKLA), 1362–1375 (EELE…EKLA), 1376–1389 (EELE…EKLA), 1390–1403 (EELE…EKLA), 1404–1417 (EELE…EKLA), 1418–1431 (EELE…EKLA), 1432–1445 (EELE…EKLA), 1446–1459 (EELE…EKLA), 1460–1473 (EELE…EKLA), 1474–1487 (EELE…EKLA), 1488–1501 (EELE…EKLA), 1502–1515 (EELE…EKLA), 1516–1529 (EELE…EKLA), 1530–1543 (EELE…EKLA), 1544–1557 (EELE…EKLA), 1558–1571 (EELE…EKLA), and 1572–1585 (EELE…KRLA). A 41 X 14 AA tandem repeats of E-E-L-E-L-K-[VA]-A-E-N-E-K-L-A region spans residues 1012–1529 (EELELKAAEN…LKAAENEKLA (518 aa)).

The protein resides in the cell projection. It is found in the cilium. The protein localises to the flagellum. A component of FAZ filament that is required for correct FAZ assembly and attachment. Not essential for new flagellum growth. This Trypanosoma brucei gambiense (strain MHOM/CI/86/DAL972) protein is Flagellar attachment zone protein 1.